The primary structure comprises 152 residues: Ribosome maturation factor RimP (152 aa).

It belongs to the RimP family.

The protein resides in the cytoplasm. Its function is as follows. Required for maturation of 30S ribosomal subunits. This Serratia proteamaculans (strain 568) protein is Ribosome maturation factor RimP.